The chain runs to 262 residues: Acetylglutamate kinase (262 aa).

Residues 46–47 (GG), Arg-68, and Asn-160 contribute to the substrate site.

Belongs to the acetylglutamate kinase family. ArgB subfamily.

Its subcellular location is the cytoplasm. It carries out the reaction N-acetyl-L-glutamate + ATP = N-acetyl-L-glutamyl 5-phosphate + ADP. Its pathway is amino-acid biosynthesis; L-arginine biosynthesis; N(2)-acetyl-L-ornithine from L-glutamate: step 2/4. In terms of biological role, catalyzes the ATP-dependent phosphorylation of N-acetyl-L-glutamate. This chain is Acetylglutamate kinase, found in Shewanella amazonensis (strain ATCC BAA-1098 / SB2B).